The chain runs to 242 residues: Flavin prenyltransferase PAD1, mitochondrial (242 aa).

The transit peptide at 1-58 directs the protein to the mitochondrion; the sequence is MLLFPRRTNIAFFKTTGIFANFPLLGRTITTSPSFLTHKLSKEVTRASTSPPRPKRIV. FMN is bound by residues 63-65, Ser89, 140-143, and Arg175; these read GAT and SMKS. Residues Tyr205 and Arg221 each contribute to the dimethylallyl phosphate site.

Belongs to the UbiX/PAD1 family. In terms of assembly, oligomer.

The protein localises to the mitochondrion. The enzyme catalyses dimethylallyl phosphate + FMNH2 = prenylated FMNH2 + phosphate. Functionally, flavin prenyltransferase that catalyzes the synthesis of the prenylated FMN cofactor (prenyl-FMN) for the ferulic acid decarboxylase FDC1/ubiD. The prenyltransferase is metal-independent and links a dimethylallyl moiety from dimethylallyl monophosphate (DMAP) to the flavin N5 and C6 atoms of FMN. Involved in the decarboxylation of phenylacrylic acids like ferulic acid, p-coumaric acid or cinnamic acid, producing the corresponding vinyl derivatives which play the role of aroma metabolites. Also involved in the degradation of the food preservative sorbic acid (2,4-hexadienoic acid) to a volatile hydrocarbon, 1,3-pentadiene. Not essential for ubiquinone synthesis. Can rescue Q biosynthesis in E.coli strains lacking UbiX. Has mRNA binding activity. This Saccharomyces cerevisiae (strain ATCC 204508 / S288c) (Baker's yeast) protein is Flavin prenyltransferase PAD1, mitochondrial.